Reading from the N-terminus, the 67-residue chain is DNA-directed RNA polymerase subunit omega (67 aa).

The protein belongs to the RNA polymerase subunit omega family. The RNAP catalytic core consists of 2 alpha, 1 beta, 1 beta' and 1 omega subunit. When a sigma factor is associated with the core the holoenzyme is formed, which can initiate transcription.

It carries out the reaction RNA(n) + a ribonucleoside 5'-triphosphate = RNA(n+1) + diphosphate. In terms of biological role, promotes RNA polymerase assembly. Latches the N- and C-terminal regions of the beta' subunit thereby facilitating its interaction with the beta and alpha subunits. This Paracidovorax citrulli (strain AAC00-1) (Acidovorax citrulli) protein is DNA-directed RNA polymerase subunit omega.